A 181-amino-acid chain; its full sequence is Oligoribonuclease (181 aa).

The Exonuclease domain maps to 8–171 (LIWVDLEMTG…DDIRESIAEL (164 aa)). Tyr-129 is a catalytic residue.

The protein belongs to the oligoribonuclease family.

It localises to the cytoplasm. In terms of biological role, 3'-to-5' exoribonuclease specific for small oligoribonucleotides. The protein is Oligoribonuclease of Vibrio campbellii (strain ATCC BAA-1116).